The sequence spans 362 residues: Atypical chemokine receptor 3 (362 aa).

At Met1–Lys40 the chain is on the extracellular side. Asn13, Asn22, and Asn39 each carry an N-linked (GlcNAc...) asparagine glycan. Residues Ser41–Ala61 form a helical membrane-spanning segment. Residues Asn62–Cys81 lie on the Cytoplasmic side of the membrane. The chain crosses the membrane as a helical span at residues Tyr82 to Val102. The Extracellular segment spans residues Ser103–Lys118. A disulfide bridge connects residues Cys117 and Cys196. Residues Ile119–Ser139 form a helical membrane-spanning segment. The Cytoplasmic portion of the chain corresponds to Val140 to Arg162. The helical transmembrane segment at Ala163–Leu183 threads the bilayer. At Lys184 to Glu213 the chain is on the extracellular side. The chain crosses the membrane as a helical span at residues Leu214–Leu234. At Leu235–Lys252 the chain is on the cytoplasmic side. The chain crosses the membrane as a helical span at residues Ile253–Leu273. The Extracellular segment spans residues Leu274–Ala296. A helical membrane pass occupies residues Leu297–Asn319. The Cytoplasmic portion of the chain corresponds to Arg320–Lys362. Positions Tyr324–Lys362 are C-terminal cytoplasmic tail. Phosphoserine is present on residues Ser347, Ser350, and Ser355.

Belongs to the G-protein coupled receptor 1 family. Atypical chemokine receptor subfamily. Homodimer. Can form heterodimers with CXCR4; heterodimerization may regulate CXCR4 signaling activity. Interacts with ARRB1 and ARRB2. The Ser/Thr residues in the C-terminal cytoplasmic tail may be phosphorylated. In terms of processing, ubiquitinated at the Lys residues in its C-terminal cytoplasmic tail and is essential for correct trafficking from and to the cell membrane. Deubiquitinated by CXCL12-stimulation in a reversible manner.

It is found in the cell membrane. The protein resides in the early endosome. The protein localises to the recycling endosome. Functionally, atypical chemokine receptor that controls chemokine levels and localization via high-affinity chemokine binding that is uncoupled from classic ligand-driven signal transduction cascades, resulting instead in chemokine sequestration, degradation, or transcytosis. Also known as interceptor (internalizing receptor) or chemokine-scavenging receptor or chemokine decoy receptor. Acts as a receptor for chemokines CXCL11 and CXCL12/SDF1. Chemokine binding does not activate G-protein-mediated signal transduction but instead induces beta-arrestin recruitment, leading to ligand internalization and activation of MAPK signaling pathway. Required for regulation of CXCR4 protein levels in migrating interneurons, thereby adapting their chemokine responsiveness. In glioma cells, transduces signals via MEK/ERK pathway, mediating resistance to apoptosis. Promotes cell growth and survival. Not involved in cell migration, adhesion or proliferation of normal hematopoietic progenitors but activated by CXCL11 in malignant hemapoietic cells, leading to phosphorylation of ERK1/2 (MAPK3/MAPK1) and enhanced cell adhesion and migration. Plays a regulatory role in CXCR4-mediated activation of cell surface integrins by CXCL12. Required for heart valve development. Regulates axon guidance in the oculomotor system through the regulation of CXCL12 levels. This Canis lupus familiaris (Dog) protein is Atypical chemokine receptor 3 (ACKR3).